Reading from the N-terminus, the 50-residue chain is Small ribosomal subunit protein uS14 (50 aa).

The Zn(2+) site is built by C15, C18, C33, and C36.

This sequence belongs to the universal ribosomal protein uS14 family. Zinc-binding uS14 subfamily. In terms of assembly, part of the 30S ribosomal subunit. It depends on Zn(2+) as a cofactor.

In terms of biological role, binds 16S rRNA, required for the assembly of 30S particles. The sequence is that of Small ribosomal subunit protein uS14 from Methanosarcina mazei (strain ATCC BAA-159 / DSM 3647 / Goe1 / Go1 / JCM 11833 / OCM 88) (Methanosarcina frisia).